The following is a 543-amino-acid chain: Periplasmic oligopeptide-binding protein OppA (543 aa).

An N-terminal signal peptide occupies residues 1-26 (MTNITKRSLVAAGVLAALMAGNVALA). C297 and C443 are oxidised to a cystine.

Belongs to the bacterial solute-binding protein 5 family. The complex is composed of two ATP-binding proteins (OppD and OppF), two transmembrane proteins (OppB and OppC) and a solute-binding protein (OppA).

The protein localises to the periplasm. In terms of biological role, part of the ABC transporter complex OppABCDF involved in the uptake of oligopeptides. Plays an important nutritional role. Binds peptides containing from two to five amino acid residues. Displays a preference for tripeptides and tetrapeptides over dipeptides and pentapeptides, for peptides composed of L-amino acids and for positively charged peptides. Cannot bind the cell wall peptide L-Ala-D-Gly-gamma-meso-diaminopimelic acid. In Escherichia coli (strain K12), this protein is Periplasmic oligopeptide-binding protein OppA.